The chain runs to 182 residues: Large ribosomal subunit protein uL5 (182 aa).

This sequence belongs to the universal ribosomal protein uL5 family. In terms of assembly, part of the 50S ribosomal subunit; part of the 5S rRNA/L5/L18/L25 subcomplex. Contacts the 5S rRNA and the P site tRNA. Forms a bridge to the 30S subunit in the 70S ribosome.

This is one of the proteins that bind and probably mediate the attachment of the 5S RNA into the large ribosomal subunit, where it forms part of the central protuberance. In the 70S ribosome it contacts protein S13 of the 30S subunit (bridge B1b), connecting the 2 subunits; this bridge is implicated in subunit movement. Contacts the P site tRNA; the 5S rRNA and some of its associated proteins might help stabilize positioning of ribosome-bound tRNAs. The sequence is that of Large ribosomal subunit protein uL5 from Borrelia hermsii (strain HS1 / DAH).